Reading from the N-terminus, the 476-residue chain is Beta-amyrin 28-monooxygenase (476 aa).

Residues glutamate 2 to tyrosine 22 form a helical membrane-spanning segment. Cysteine 421 is a heme binding site.

The protein belongs to the cytochrome P450 family. Heme serves as cofactor. Specifically expressed in roots.

The protein localises to the membrane. It catalyses the reaction beta-amyrin + 3 reduced [NADPH--hemoprotein reductase] + 3 O2 = oleanolate + 3 oxidized [NADPH--hemoprotein reductase] + 4 H2O + 4 H(+). In terms of biological role, catalyzes the carboxylation of beta-amyrin at the C-28 position to form oleanolate. Catalyzes the carboxylation of alpha-amyrin at the C-28 position to form ursolate. The protein is Beta-amyrin 28-monooxygenase (CYP716A44) of Solanum lycopersicum (Tomato).